We begin with the raw amino-acid sequence, 472 residues long: Adenosylhomocysteinase (472 aa).

Substrate-binding residues include Thr-61, Asp-139, and Glu-198. Thr-199 to Thr-201 provides a ligand contact to NAD(+). Positions 228 and 232 each coordinate substrate. NAD(+) is bound by residues Asn-233, Gly-262–Gly-267, Glu-285, Asn-320, Ile-341–His-343, and Asn-386.

Belongs to the adenosylhomocysteinase family. Requires NAD(+) as cofactor.

It localises to the cytoplasm. The catalysed reaction is S-adenosyl-L-homocysteine + H2O = L-homocysteine + adenosine. It functions in the pathway amino-acid biosynthesis; L-homocysteine biosynthesis; L-homocysteine from S-adenosyl-L-homocysteine: step 1/1. Functionally, may play a key role in the regulation of the intracellular concentration of adenosylhomocysteine. In Sphingopyxis alaskensis (strain DSM 13593 / LMG 18877 / RB2256) (Sphingomonas alaskensis), this protein is Adenosylhomocysteinase.